The sequence spans 134 residues: Prolactin (134 aa).

C126 and C134 form a disulfide bridge.

It belongs to the somatotropin/prolactin family.

The protein resides in the secreted. The sequence is that of Prolactin from Bufo japonicus (Japanese common toad).